Here is a 660-residue protein sequence, read N- to C-terminus: Bifunctional polymyxin resistance protein ArnA (660 aa).

The formyltransferase ArnAFT stretch occupies residues 1-304; the sequence is MKTVVFAYHD…TLGLVQGSRL (304 aa). Residue 86–88 participates in (6R)-10-formyltetrahydrofolate binding; it reads HLI. The Proton donor; for formyltransferase activity role is filled by histidine 104. (6R)-10-formyltetrahydrofolate contacts are provided by residues arginine 114 and 136–140; that span reads VKRAD. Residues 314 to 660 are dehydrogenase ArnADH; it reads RRTRVLILGV…RTVDLTDKPS (347 aa). NAD(+)-binding positions include aspartate 347 and 368-369; that span reads DI. UDP-alpha-D-glucuronate is bound by residues alanine 393, tyrosine 398, and 432–433; that span reads TS. The active-site Proton acceptor; for decarboxylase activity is the glutamate 434. UDP-alpha-D-glucuronate contacts are provided by residues arginine 460, asparagine 492, 526 to 535, and tyrosine 613; that span reads KLIDGGKQKR. Arginine 619 (proton donor; for decarboxylase activity) is an active-site residue.

It in the N-terminal section; belongs to the Fmt family. UDP-L-Ara4N formyltransferase subfamily. This sequence in the C-terminal section; belongs to the NAD(P)-dependent epimerase/dehydratase family. UDP-glucuronic acid decarboxylase subfamily. In terms of assembly, homohexamer, formed by a dimer of trimers.

The enzyme catalyses UDP-alpha-D-glucuronate + NAD(+) = UDP-beta-L-threo-pentopyranos-4-ulose + CO2 + NADH. The catalysed reaction is UDP-4-amino-4-deoxy-beta-L-arabinose + (6R)-10-formyltetrahydrofolate = UDP-4-deoxy-4-formamido-beta-L-arabinose + (6S)-5,6,7,8-tetrahydrofolate + H(+). It participates in nucleotide-sugar biosynthesis; UDP-4-deoxy-4-formamido-beta-L-arabinose biosynthesis; UDP-4-deoxy-4-formamido-beta-L-arabinose from UDP-alpha-D-glucuronate: step 1/3. The protein operates within nucleotide-sugar biosynthesis; UDP-4-deoxy-4-formamido-beta-L-arabinose biosynthesis; UDP-4-deoxy-4-formamido-beta-L-arabinose from UDP-alpha-D-glucuronate: step 3/3. It functions in the pathway bacterial outer membrane biogenesis; lipopolysaccharide biosynthesis. In terms of biological role, bifunctional enzyme that catalyzes the oxidative decarboxylation of UDP-glucuronic acid (UDP-GlcUA) to UDP-4-keto-arabinose (UDP-Ara4O) and the addition of a formyl group to UDP-4-amino-4-deoxy-L-arabinose (UDP-L-Ara4N) to form UDP-L-4-formamido-arabinose (UDP-L-Ara4FN). The modified arabinose is attached to lipid A and is required for resistance to polymyxin and cationic antimicrobial peptides. The polypeptide is Bifunctional polymyxin resistance protein ArnA (Escherichia coli O1:K1 / APEC).